The chain runs to 469 residues: Argininosuccinate lyase (469 aa).

This sequence belongs to the lyase 1 family. Argininosuccinate lyase subfamily.

The protein resides in the cytoplasm. It carries out the reaction 2-(N(omega)-L-arginino)succinate = fumarate + L-arginine. Its pathway is amino-acid biosynthesis; L-arginine biosynthesis; L-arginine from L-ornithine and carbamoyl phosphate: step 3/3. This Burkholderia multivorans (strain ATCC 17616 / 249) protein is Argininosuccinate lyase.